A 237-amino-acid chain; its full sequence is MKWIEVNTYDEMSEVAANIFLKQIQKKPNSVLGLATGGSPVGMYKELVARYQAGQLTFKDVQTFNLDEYVGLKRSSPASYWTFMHNNLFNGVNIKQENIHLPNGEAEDLAAECKAYDARIDAAGGIDLQLLGIGVNGHIGFNEPGTPFDSMTNIVELTESTRTENAIYFDDAADVPIHAITMGIQSIMKAKEIVLIAFGEKKMEAIQKLKSGHITEDFPASQLLKHPNVTIIYGGTN.

Asp-67 serves as the catalytic Proton acceptor; for enolization step. The active-site For ring-opening step is Asn-136. His-138 acts as the Proton acceptor; for ring-opening step in catalysis. Glu-143 functions as the For ring-opening step in the catalytic mechanism.

This sequence belongs to the glucosamine/galactosamine-6-phosphate isomerase family. NagB subfamily.

It carries out the reaction alpha-D-glucosamine 6-phosphate + H2O = beta-D-fructose 6-phosphate + NH4(+). It functions in the pathway amino-sugar metabolism; N-acetylneuraminate degradation; D-fructose 6-phosphate from N-acetylneuraminate: step 5/5. In terms of biological role, catalyzes the reversible isomerization-deamination of glucosamine 6-phosphate (GlcN6P) to form fructose 6-phosphate (Fru6P) and ammonium ion. In Lysinibacillus sphaericus (strain C3-41), this protein is Glucosamine-6-phosphate deaminase.